The chain runs to 452 residues: MKETIVAQATPIGRGGVGILRVSGPLAADVAKAVVGKALKPRFANYLPFKDEDGTTLDQGIALFFQSPNSFTGEDILELQGHGGQVVLDLLLKRILQVNGVRLARPGEFSEQAFLNDKLDLAQAEAIADLIDASSEQAARSALKSLQGEFSNKVNQLVDGVIYLRTYVEAAIDFPDEEIDFLADGKIEGHLNDIIAQLERVRSEAKQGSILREGMKVVIAGRPNAGKSSLLNALAGREAAIVTDIAGTTRDVLREHIHIDGMPLHIIDTAGLRDATDEVERIGITRAWNEIEQADRVLLMLDSSDPDSRQPEKVRSEFLAKLPSHIPVTIIRNKTDLSGENEGVTQENGFTVIRLSAQTRQGIDLLREHLKQSMGYQTGTEGGFLARRRHLDALEKAAYHLRQGHIQLTEFRAGELLAEELRMVQSHLSEITGQFTSDDLLSNIFSSFCIGK.

3 residues coordinate (6S)-5-formyl-5,6,7,8-tetrahydrofolate: R21, E78, and K118. The TrmE-type G domain maps to 214 to 375; the sequence is GMKVVIAGRP…LREHLKQSMG (162 aa). N224 is a binding site for K(+). Residues 224–229, 243–249, and 268–271 each bind GTP; these read NAGKSS, TDIAGTT, and DTAG. S228 contacts Mg(2+). Residues T243, I245, and T248 each contribute to the K(+) site. Residue T249 participates in Mg(2+) binding. K452 contacts (6S)-5-formyl-5,6,7,8-tetrahydrofolate.

Belongs to the TRAFAC class TrmE-Era-EngA-EngB-Septin-like GTPase superfamily. TrmE GTPase family. As to quaternary structure, homodimer. Heterotetramer of two MnmE and two MnmG subunits. It depends on K(+) as a cofactor.

It is found in the cytoplasm. In terms of biological role, exhibits a very high intrinsic GTPase hydrolysis rate. Involved in the addition of a carboxymethylaminomethyl (cmnm) group at the wobble position (U34) of certain tRNAs, forming tRNA-cmnm(5)s(2)U34. The protein is tRNA modification GTPase MnmE of Actinobacillus succinogenes (strain ATCC 55618 / DSM 22257 / CCUG 43843 / 130Z).